A 1875-amino-acid polypeptide reads, in one-letter code: Neuron navigator 1 (1875 aa).

An N-acetylmethionine modification is found at Met1. The interval 1 to 63 (MLGSSVKSVQ…GGSGSMAKAS (63 aa)) is disordered. Phosphoserine is present on residues Ser93 and Ser145. Disordered regions lie at residues 115 to 230 (SDDM…EERA) and 280 to 339 (SSLR…VGGS). Residue Thr162 is modified to Phosphothreonine. A phosphoserine mark is found at Ser197 and Ser202. Residues 258–283 (ESQRKRTVQNVLDLRQNLEETMSSLR) adopt a coiled-coil conformation. Over residues 280–291 (SSLRGSQVTHSS) the composition is skewed to polar residues. Phosphoserine occurs at positions 299, 311, 315, 365, and 394. Positions 304–318 (PRSVSSLSNRSSPLS) are enriched in low complexity. 2 disordered regions span residues 391-463 (GYMS…RTDS) and 477-783 (SESE…AELP). Composition is skewed to low complexity over residues 414–428 (DESSSISSGLSDASD) and 436–456 (NASSSLNSLPTTPTASRRSST). Phosphoserine is present on residues Ser455, Ser477, Ser479, and Ser493. Positions 479-489 (SEEKTPKKLEY) are enriched in basic and acidic residues. Residues 506 to 522 (ERPESCDDASKGGELKK) are compositionally biased toward basic and acidic residues. Ser531 carries the post-translational modification Phosphoserine. Position 537 is a phosphothreonine (Thr537). At Ser544 the chain carries Phosphoserine. Thr547 is subject to Phosphothreonine. Positions 558-569 (GKPEGKATDKGK) are enriched in basic and acidic residues. Thr575 carries the post-translational modification Phosphothreonine. Residues 584-594 (AGRDRLSDAKK) show a composition bias toward basic and acidic residues. Composition is skewed to polar residues over residues 618-638 (GTATVMQTGSSATLSKIQKSS) and 648-658 (RKTSLDVSNSV). Ser651 is subject to Phosphoserine. Arg690 is modified (omega-N-methylarginine). 2 stretches are compositionally biased toward polar residues: residues 696–712 (VSSSIDPSLLSTKQGGL) and 726–735 (GRSTPAPVNQ). Residues 733 to 758 (VNQTDREKEKAKAKAVALDSDNISLK) are a coiled coil. Phosphoserine occurs at positions 752, 756, 762, 799, and 810. The span at 753 to 772 (DNISLKSIGSPESTPKNQAS) shows a compositional bias: polar residues. Disordered regions lie at residues 800-840 (LANL…PLPS) and 893-982 (MSLP…SPPA). Composition is skewed to low complexity over residues 807–818 (NSNSLDLPSSSD) and 893–902 (MSLPSAFPSS). A Phosphoserine modification is found at Ser998. Thr1004 carries the post-translational modification Phosphothreonine. Residues 1070-1161 (SSAEERMQSE…SEAQAVIQGA (92 aa)) adopt a coiled-coil conformation. Thr1168 carries the post-translational modification Phosphothreonine. Disordered stretches follow at residues 1172–1202 (LRIKRQNSSDSISSLNSITSHSSIGSSKDAD), 1242–1306 (ATPD…KEVS), 1359–1381 (VAPGPSSGCTPGQVPGSSALSSP), and 1808–1841 (KLYHLPPPSVGPHSTASPPEDRTVKDSTPNSLDS). Ser1179 is modified (phosphoserine). Over residues 1179–1198 (SSDSISSLNSITSHSSIGSS) the composition is skewed to low complexity. Positions 1244–1259 (PDSSAPSSPKLQHGST) are enriched in polar residues. Residues 1260-1281 (ETASPSIKSSTSSSVGTEVTET) show a composition bias toward low complexity. Residue Ser1263 is modified to Phosphoserine. The stretch at 1301–1360 (EKKEVSELRSELWEKEMKLTDIRLEALNSAHQLDQLRETMHNMQLEVDLLKAENDRLKVA) forms a coiled coil. Residues 1365–1381 (SGCTPGQVPGSSALSSP) show a composition bias toward polar residues. Ser1380 bears the Phosphoserine mark.

The protein belongs to the Nav/unc-53 family. As to quaternary structure, interacts with tubulin. Expressed in heart and brain. Present in brain (at protein level). In adult brain, found almost exclusively in areas of secondary neurogenesis from the hippocampus and the subventricular zone.

It localises to the cytoplasm. The protein resides in the cytoskeleton. In terms of biological role, may be involved in neuronal migration. The chain is Neuron navigator 1 (Nav1) from Mus musculus (Mouse).